Consider the following 674-residue polypeptide: Zyxin (674 aa).

Residues 35–447 (PPKPKVNPFR…PHQDQTSGSQ (413 aa)) form a disordered region. Residues 86–109 (LPPPPPNEEPMSPPGSSFPPPPPS) show a composition bias toward pro residues. Residues 110–120 (FGDDGPGSPLG) are compositionally biased toward low complexity. Pro residues-rich tracts occupy residues 121–148 (LFPPPPPPEFSEPFPPPIEESFPSPPPL), 162–180 (ASVPPPPPPLPSPPEPAPP), 187–209 (KPAPVLPKPPPPSAFPKPEPPQS), 222–240 (KPSPPSAVAPKPVAPPPVA), and 254–266 (AAPPTHTPAPPAP). Basic and acidic residues-rich tracts occupy residues 328–341 (AKHEAPPPAAKHEA) and 358–387 (QRDKPRVLEKPRANVRDLVPEPPVETRGER). LIM zinc-binding domains follow at residues 481–542 (ELCG…TLEC), 543–600 (CAVC…RRYA), and 601–671 (PRCT…RARA).

The protein belongs to the zyxin/ajuba family. In terms of assembly, interacts (via LIM2 domain) with hesx1/anf1.

The protein resides in the cytoplasm. The protein localises to the cytoskeleton. It is found in the cell junction. It localises to the focal adhesion. In terms of biological role, adhesion plaque protein. May be a component of a signal transduction pathway that mediates adhesion-stimulated changes in gene expression. Suppresses the transcription-repressing activity of hesx1/anf1. This Xenopus tropicalis (Western clawed frog) protein is Zyxin.